The primary structure comprises 526 residues: Zinc finger protein 69 homolog (526 aa).

Positions 1-39 (MPQQLLITLPTEASTWVKLQHPKKAVEGAPLWEDVTKMF) constitute an SCAN box domain. Positions 76-147 (LTFKDISIDF…EKEGPGDPSS (72 aa)) constitute a KRAB domain. C2H2-type zinc fingers lie at residues 271 to 293 (YECN…MRIH), 299 to 321 (FRCK…QRIH), 327 to 349 (FECE…HRTH), 355 to 377 (YVCD…LRTH), 383 to 405 (FTCN…IRIH), 411 to 433 (YACT…QRIH), 439 to 461 (YKCK…KTVH), 467 to 489 (YECN…QRHH), and 495 to 517 (YECN…HEIH).

Belongs to the krueppel C2H2-type zinc-finger protein family. As to expression, expressed in visceral and subcutaneous adipose tissue.

The protein localises to the nucleus. Its function is as follows. Putative transcription factor that appears to regulate lipid metabolism. This Homo sapiens (Human) protein is Zinc finger protein 69 homolog (ZFP69).